The sequence spans 395 residues: S-adenosylmethionine synthase (395 aa).

Position 14 (His-14) interacts with ATP. Asp-16 provides a ligand contact to Mg(2+). Residue Glu-42 coordinates K(+). L-methionine contacts are provided by Glu-55 and Gln-98. A flexible loop region spans residues Gln-98–Lys-108. Residues Asp-174–Lys-176, Arg-240–Phe-241, Asp-249, Arg-255–Lys-256, Ala-272, and Lys-276 contribute to the ATP site. Asp-249 contacts L-methionine. Residue Lys-280 coordinates L-methionine.

The protein belongs to the AdoMet synthase family. Homotetramer; dimer of dimers. The cofactor is Mg(2+). Requires K(+) as cofactor.

It localises to the cytoplasm. It carries out the reaction L-methionine + ATP + H2O = S-adenosyl-L-methionine + phosphate + diphosphate. The protein operates within amino-acid biosynthesis; S-adenosyl-L-methionine biosynthesis; S-adenosyl-L-methionine from L-methionine: step 1/1. Its function is as follows. Catalyzes the formation of S-adenosylmethionine (AdoMet) from methionine and ATP. The overall synthetic reaction is composed of two sequential steps, AdoMet formation and the subsequent tripolyphosphate hydrolysis which occurs prior to release of AdoMet from the enzyme. This Thermotoga neapolitana (strain ATCC 49049 / DSM 4359 / NBRC 107923 / NS-E) protein is S-adenosylmethionine synthase.